The following is a 118-amino-acid chain: Large ribosomal subunit protein bL19 (118 aa).

This sequence belongs to the bacterial ribosomal protein bL19 family.

In terms of biological role, this protein is located at the 30S-50S ribosomal subunit interface and may play a role in the structure and function of the aminoacyl-tRNA binding site. This is Large ribosomal subunit protein bL19 from Helicobacter pylori (strain P12).